A 287-amino-acid chain; its full sequence is ATP synthase subunit a (287 aa).

The next 6 helical transmembrane spans lie at L37–A57, F96–L116, D144–I164, P187–A207, E224–V244, and T266–A286.

This sequence belongs to the ATPase A chain family. In terms of assembly, F-type ATPases have 2 components, CF(1) - the catalytic core - and CF(0) - the membrane proton channel. CF(1) has five subunits: alpha(3), beta(3), gamma(1), delta(1), epsilon(1). CF(0) has three main subunits: a(1), b(2) and c(9-12). The alpha and beta chains form an alternating ring which encloses part of the gamma chain. CF(1) is attached to CF(0) by a central stalk formed by the gamma and epsilon chains, while a peripheral stalk is formed by the delta and b chains.

It is found in the cell inner membrane. Key component of the proton channel; it plays a direct role in the translocation of protons across the membrane. The polypeptide is ATP synthase subunit a (Acidovorax ebreus (strain TPSY) (Diaphorobacter sp. (strain TPSY))).